Here is a 31-residue protein sequence, read N- to C-terminus: Hemocyanin subunit 2 (31 aa).

It belongs to the tyrosinase family. Hemocyanin subfamily. Hemolymph.

The protein localises to the secreted. It is found in the extracellular space. In terms of biological role, hemocyanins are copper-containing oxygen carriers occurring freely dissolved in the hemolymph of many mollusks and arthropods. The sequence is that of Hemocyanin subunit 2 from Maja squinado (Mediterranean spider crab).